Here is a 346-residue protein sequence, read N- to C-terminus: Protein RecA (346 aa).

65–72 is a binding site for ATP; sequence GPESSGKT.

The protein belongs to the RecA family.

Its subcellular location is the cytoplasm. Functionally, can catalyze the hydrolysis of ATP in the presence of single-stranded DNA, the ATP-dependent uptake of single-stranded DNA by duplex DNA, and the ATP-dependent hybridization of homologous single-stranded DNAs. It interacts with LexA causing its activation and leading to its autocatalytic cleavage. This Enterococcus hirae (strain ATCC 9790 / DSM 20160 / JCM 8729 / LMG 6399 / NBRC 3181 / NCIMB 6459 / NCDO 1258 / NCTC 12367 / WDCM 00089 / R) protein is Protein RecA.